Reading from the N-terminus, the 79-residue chain is Aquaporin Z (79 aa).

A run of 2 helical transmembrane segments spans residues 4–24 and 33–53; these read LFAE…SAVF and IGFA…AYAV. The short motif at 62 to 64 is the NPA 1 element; the sequence is NPA.

This sequence belongs to the MIP/aquaporin (TC 1.A.8) family. As to quaternary structure, homotetramer.

It localises to the cell membrane. The enzyme catalyses H2O(in) = H2O(out). Channel that permits osmotically driven movement of water in both directions. It is involved in the osmoregulation and in the maintenance of cell turgor during volume expansion in rapidly growing cells. It mediates rapid entry or exit of water in response to abrupt changes in osmolarity. The chain is Aquaporin Z from Flavobacterium johnsoniae (Cytophaga johnsonae).